An 895-amino-acid chain; its full sequence is La RNA-binding domain-containing protein LHP1 (895 aa).

Disordered stretches follow at residues 24–265 (ANGN…PPPS), 285–344 (SATS…HDAT), 359–590 (GEDK…LGHG), 796–857 (PDAA…AQDV), and 870–895 (VNGE…NYEQ). Residues 31–75 (SSPSSSSSATPEPTSLSSSTSGKKAFSTATSKSGQQKQGSSPQPG) are compositionally biased toward low complexity. Positions 95 to 143 (QRTDRSEEKEKRGSSSKNWRERSHRDEKNQDDGEKRNGRERSKKEKGDK) are enriched in basic and acidic residues. Low complexity predominate over residues 152–170 (SATSSEKTAKSLSSSTKNA). Composition is skewed to polar residues over residues 172–184 (GVTS…NPIA) and 192–216 (KAQN…STIN). Residues 228-244 (DNWRARPAKVEKNEKTE) are compositionally biased toward basic and acidic residues. Residues 251 to 260 (QAQPQPQRQL) show a composition bias toward low complexity. Residues 296–314 (KSDKEKSLTNGMVKEEDSG) are compositionally biased toward basic and acidic residues. Over residues 325–336 (AAAAAAAGTSST) the composition is skewed to low complexity. Basic and acidic residues-rich tracts occupy residues 359-371 (GEDK…ERLN), 405-428 (HAAE…REGG), 452-468 (EGKK…DGHA), and 485-495 (GDVKETKEGDA). The segment covering 496–508 (RSASQQESSSHRS) has biased composition (low complexity). Over residues 510–521 (PSISASANTGID) the composition is skewed to polar residues. Over residues 563–572 (RGSFGGGRAR) the composition is skewed to gly residues. Residues 706–796 (VPNLDPLRFY…GAESHRWVLP (91 aa)) enclose the HTH La-type RNA-binding domain. A Phosphoserine modification is found at S847. Residues 873-884 (EIKEKEEVKAME) are compositionally biased toward basic and acidic residues. Acidic residues predominate over residues 885 to 895 (NEGEESENYEQ).

Its function is as follows. May act as an RNA-binding protein. This is La RNA-binding domain-containing protein LHP1 from Cryptococcus neoformans var. grubii serotype A (strain H99 / ATCC 208821 / CBS 10515 / FGSC 9487) (Filobasidiella neoformans var. grubii).